The primary structure comprises 78 residues: Small ribosomal subunit protein bS20 (78 aa).

It belongs to the bacterial ribosomal protein bS20 family.

In terms of biological role, binds directly to 16S ribosomal RNA. The sequence is that of Small ribosomal subunit protein bS20 from Streptococcus pneumoniae serotype 19F (strain G54).